The sequence spans 306 residues: Dioxygenase FrzG (306 aa).

The Fe cation site is built by H132, D134, and H216.

Belongs to the PhyH family. In terms of assembly, homodimer. It depends on Fe cation as a cofactor.

The enzyme catalyses (1S,4S)-4-[(4-methoxyphenyl)methyl]-2-methyl-2,5-diazaspiro[bicyclo[3.2.1]octane-6,1'-cyclohexan]-4'-one + 2-oxoglutarate + O2 = (2S)-3-(4-methoxyphenyl)-2-[(3S)-3-(methylamino)-8-oxo-1-azaspiro[4.5]decan-1-yl]propanal + succinate + CO2. Its pathway is secondary metabolite biosynthesis. In terms of biological role, dioxygenase; part of the gene cluster that mediates the biosynthesis of the alkaloid (-)-FR901483, a potent immunosuppressant that shows efficacy in animal models and a probable inhibitor of purine nucleotide biosynthesis by targeting phosphoribosylpyrophosphate amidotransferase (PPAT). Within the pathway, FrzG cleaves the C9-N10' bond to yield a conjugated iminium. FrzG is also able to catalyze the dehydrogenation between C7 and C8 which leads to a shunt product. The biosynthesis of (-)-FR901483 starts with the condensation of two L-tyrosines to yield (S,S)-dityrosyl-piperazine. This process occurs in 3 steps with the non-canonical nonribosomal peptide synthetase FrzA catalyzing the reduction of L-tyrosine into L-tyrosinal, the spontaneous condensation of 2 L-tyrosinal units, and the subsequent reduction by the NmrA-like family domain-containing oxidoreductase FrzB. The cytochrome P450 monooxygenase FrzC then performs coupling between N10 and C1' to morph the piperazine into a 1,4-diazabicyclo[3.2.1]octane spiro-fused to a 2,5-cyclohexadienone. The dienone portion is further reduced to cyclohexanone by the flavin-dependent reductase FrzD. The methyltranserases (MTs) FrzE and FrzF are then involved in the methylation at the C10' amine and the C4 phenolic oxygen, respectively. The order of the two MTs appear to be interchangeable. Cleavage of the C9-N10' bond by the dioxygenase FrzG then leads to formation of a conjugated iminium. In addition to the oxidation of C9, an additional dehydrogenation between C7 and C8 can occur to give a likely shunt product. The next biosynthetic step is the intramolecular aldol condensation catalyzed by the newly identified aldolase FrzH to yield an aza-tricyclic product with the formation of a C9-C3' bond. The short-chain dehydrogenase/reductase FrzI then produces dephospho-(-)-FR901483 that is phosphorylated at C4'-OH into (-)-FR901483 by the phosphotransferase FrzJ. The protein is Dioxygenase FrzG of Cladobotryum sp.